The sequence spans 999 residues: Hypoxia up-regulated protein 1 (999 aa).

Residues 1–32 form the signal peptide; it reads MAATVRRQRPRRLLCWTLVAVLLADLLALSDT. N-linked (GlcNAc...) asparagine glycans are attached at residues Asn155, Asn222, and Asn515. The segment at 564 to 694 is disordered; it reads VEDSPEEEST…KKQKPARKQK (131 aa). The residue at position 567 (Ser567) is a Phosphoserine. The segment covering 574–583 has biased composition (polar residues); that stretch reads LTKLGNTISS. N-linked (GlcNAc...) asparagine glycosylation occurs at Asn596. Basic and acidic residues-rich tracts occupy residues 611-626 and 641-670; these read GSKD…KEET and PKGD…EEKG. Asn830, Asn862, and Asn869 each carry an N-linked (GlcNAc...) asparagine glycan. N6-acetyllysine is present on Lys883. Residues 909–999 form a disordered region; sequence AKFTKPRPRP…QKRSSKNDEL (91 aa). Asn922 and Asn931 each carry an N-linked (GlcNAc...) asparagine glycan. Basic and acidic residues predominate over residues 949–962; sequence EEAKPILEPDKEET. Residues 996 to 999 carry the Prevents secretion from ER motif; sequence NDEL.

This sequence belongs to the heat shock protein 70 family. In terms of assembly, part of a large chaperone multiprotein complex comprising DNAJB11, HSP90B1, HSPA5, HYOU, PDIA2, PDIA4, PDIA6, PPIB, SDF2L1, UGGT1 and very small amounts of ERP29, but not, or at very low levels, CALR nor CANX.

The protein resides in the endoplasmic reticulum lumen. Functionally, has a pivotal role in cytoprotective cellular mechanisms triggered by oxygen deprivation. Promotes HSPA5/BiP-mediated ATP nucleotide exchange and thereby activates the unfolded protein response (UPR) pathway in the presence of endoplasmic reticulum stress. May play a role as a molecular chaperone and participate in protein folding. In Cricetulus griseus (Chinese hamster), this protein is Hypoxia up-regulated protein 1 (HYOU1).